The chain runs to 227 residues: 2,3-bisphosphoglycerate-dependent phosphoglycerate mutase (227 aa).

Substrate-binding positions include 7 to 14 (RHGLSEWN), 20 to 21 (TG), arginine 59, 86 to 89 (ERHY), lysine 97, 113 to 114 (RR), and 182 to 183 (GN). Histidine 8 (tele-phosphohistidine intermediate) is an active-site residue. Glutamate 86 serves as the catalytic Proton donor/acceptor.

Belongs to the phosphoglycerate mutase family. BPG-dependent PGAM subfamily. As to quaternary structure, homodimer.

It carries out the reaction (2R)-2-phosphoglycerate = (2R)-3-phosphoglycerate. It participates in carbohydrate degradation; glycolysis; pyruvate from D-glyceraldehyde 3-phosphate: step 3/5. Functionally, catalyzes the interconversion of 2-phosphoglycerate and 3-phosphoglycerate. The chain is 2,3-bisphosphoglycerate-dependent phosphoglycerate mutase from Mannheimia succiniciproducens (strain KCTC 0769BP / MBEL55E).